The primary structure comprises 248 residues: Inhibitor of growth protein 4 (248 aa).

The stretch at Phe-25 to Ser-118 forms a coiled coil. N6-acetyllysine is present on residues Lys-112, Lys-127, and Lys-129. Residues Gln-115–Lys-160 are disordered. The Bipartite nuclear localization signal signature appears at Lys-127 to Lys-147. Arg-132 carries the post-translational modification Citrulline. 3 positions are modified to N6-acetyllysine: Lys-145, Lys-147, and Lys-155. A Citrulline modification is found at Arg-165. The segment at Pro-195–Glu-244 adopts a PHD-type zinc-finger fold. Residues Cys-198, Cys-200, Cys-211, Cys-216, His-222, Cys-225, Cys-238, and Cys-241 each coordinate Zn(2+).

The protein belongs to the ING family. Homodimer. Component of the HBO1 complex composed of KAT7/HBO1, MEAF6, ING4 or ING5, and one scaffold subunit: complexes containing BRPF scaffold (BRPF1, BRD1/BRPF2 or BRPF3) direct KAT7/HBO1 specificity towards H3K14ac, while complexes containing JADE scaffold (JADE1, JADE2 and JADE3) mediate acetylation of histone H4. Interacts with H3K4me3 and to a lesser extent with H3K4me2, the interaction augments KAT7/HBO1 acetylation activity on H3 tails. Interacts with EP300, RELA and TP53; these interactions may be indirect. Interacts with EGLN1. Interacts with BCL2A1. Post-translationally, citrullination by PADI4 within the nuclear localization signal disrupts the interaction with p53 and increases susceptibility to degradation.

It localises to the nucleus. Functionally, component of HBO1 complexes, which specifically mediate acetylation of histone H3 at 'Lys-14' (H3K14ac), and have reduced activity toward histone H4. Through chromatin acetylation it may function in DNA replication. May inhibit tumor progression by modulating the transcriptional output of signaling pathways which regulate cell proliferation. Can suppress brain tumor angiogenesis through transcriptional repression of RELA/NFKB3 target genes when complexed with RELA. May also specifically suppress loss of contact inhibition elicited by activated oncogenes such as MYC. Represses hypoxia inducible factor's (HIF) activity by interacting with HIF prolyl hydroxylase 2 (EGLN1). Can enhance apoptosis induced by serum starvation in mammary epithelial cell line HC11. This Bos taurus (Bovine) protein is Inhibitor of growth protein 4 (ING4).